The primary structure comprises 307 residues: UDP-N-acetylenolpyruvoylglucosamine reductase (307 aa).

In terms of domain architecture, FAD-binding PCMH-type spans 33–197 (TGGNADFYIT…LEAAFTLAPG (165 aa)). Arg-176 is a catalytic residue. The Proton donor role is filled by Ser-226. Glu-296 is an active-site residue.

Belongs to the MurB family. FAD serves as cofactor.

The protein resides in the cytoplasm. The enzyme catalyses UDP-N-acetyl-alpha-D-muramate + NADP(+) = UDP-N-acetyl-3-O-(1-carboxyvinyl)-alpha-D-glucosamine + NADPH + H(+). Its pathway is cell wall biogenesis; peptidoglycan biosynthesis. Cell wall formation. The chain is UDP-N-acetylenolpyruvoylglucosamine reductase from Staphylococcus aureus (strain COL).